The chain runs to 324 residues: Phthalate 4,5-dioxygenase oxygenase reductase subunit (324 aa).

Residues 9–111 (DGFTGLKVIA…ATPQNEFELI (103 aa)) form the FAD-binding FR-type domain. Position 115 to 229 (115 to 229 (RQFIFVAGGI…PGSIHFESFG (115 aa))) interacts with NAD(+). One can recognise a 2Fe-2S ferredoxin-type domain in the interval 241-324 (FSVTLGRSGI…ARNDVLVLDL (84 aa)). 4 residues coordinate [2Fe-2S] cluster: Cys275, Cys280, Cys283, and Cys311.

It belongs to the PDR/VanB family. As to quaternary structure, this dioxygenase system consists of two proteins: phthalate oxygenase and phthalate oxygenase reductase. FMN is required as a cofactor.

It carries out the reaction phthalate + NADH + O2 + H(+) = cis-4,5-dihydroxycyclohexa-2,6-diene-1,2-dicarboxylate + NAD(+). The protein operates within xenobiotic degradation; phthalate degradation; 3,4-dihydroxybenzoate from phthalate: step 1/3. This Pseudomonas putida (Arthrobacter siderocapsulatus) protein is Phthalate 4,5-dioxygenase oxygenase reductase subunit (pht2).